A 470-amino-acid chain; its full sequence is MNPNQKIITIGSICMAIGIISLILQIGNIISIWVSHSIQTGSQNHTGICNQRIITYENSTWVNQTYVNISNTNVVAGKDTTSMTLAGNSSLCPIRGWAIYSKDNSIRIGSKGDVFVIREPFISCSHLECRTFFLTQGALLNDKHSNGTVKDRSPYRALMSCPIGEAPSPYNSRFESVAWSASACHDGMGWLTIGISGPDDGAVAVLKYNGIITETIKSWRKQILRTQESECVCVNGSCFTIMTDGPSDGPASYRIFKIEKGKITKSIELDAPNSHYEECSCYPDTGTVMCVCRDNWHGSNRPWVSFNQNLDYQIGYICSGVFGDNPRPKDGKGSCDPVNVDGADGVKGFSYRYGNGVWIGRTKSNSSRKGFEMIWDPNGWTDTDSNFLVKQDVVAMTDWSGYSGSFVQHPELTGLDCMRPCFWVELIRGRPREKTTIWTSGSSISFCGVNSDTVNWSWPDGAELPFTIDK.

The Intravirion portion of the chain corresponds to 1–6 (MNPNQK). The helical transmembrane segment at 7–27 (IITIGSICMAIGIISLILQIG) threads the bilayer. The tract at residues 11-33 (GSICMAIGIISLILQIGNIISIW) is involved in apical transport and lipid raft association. Residues 28–470 (NIISIWVSHS…GAELPFTIDK (443 aa)) are Virion surface-facing. A hypervariable stalk region region spans residues 36–90 (HSIQTGSQNHTGICNQRIITYENSTWVNQTYVNISNTNVVAGKDTTSMTLAGNSS). Residues Asn44, Asn58, Asn63, Asn68, and Asn88 are each glycosylated (N-linked (GlcNAc...) asparagine; by host). Residues 91–470 (LCPIRGWAIY…GAELPFTIDK (380 aa)) are head of neuraminidase. 8 cysteine pairs are disulfide-bonded: Cys92–Cys417, Cys124–Cys129, Cys184–Cys231, Cys233–Cys238, Cys279–Cys292, Cys281–Cys290, Cys318–Cys335, and Cys421–Cys447. Residue Arg118 coordinates substrate. N-linked (GlcNAc...) asparagine; by host glycosylation is present at Asn146. Residue Asp151 is the Proton donor/acceptor of the active site. Position 152 (Arg152) interacts with substrate. Asn235 carries N-linked (GlcNAc...) asparagine; by host glycosylation. Position 277–278 (277–278 (EE)) interacts with substrate. Position 293 (Arg293) interacts with substrate. Positions 294, 298, and 324 each coordinate Ca(2+). Asn365 carries N-linked (GlcNAc...) asparagine; by host glycosylation. Arg368 contributes to the substrate binding site. The active-site Nucleophile is Tyr402. An N-linked (GlcNAc...) asparagine; by host glycan is attached at Asn455.

This sequence belongs to the glycosyl hydrolase 34 family. Homotetramer. The cofactor is Ca(2+). In terms of processing, N-glycosylated.

The protein resides in the virion membrane. The protein localises to the host apical cell membrane. The catalysed reaction is Hydrolysis of alpha-(2-&gt;3)-, alpha-(2-&gt;6)-, alpha-(2-&gt;8)- glycosidic linkages of terminal sialic acid residues in oligosaccharides, glycoproteins, glycolipids, colominic acid and synthetic substrates.. With respect to regulation, inhibited by the neuraminidase inhibitors zanamivir (Relenza) and oseltamivir (Tamiflu). These drugs interfere with the release of progeny virus from infected cells and are effective against all influenza strains. Resistance to neuraminidase inhibitors is quite rare. Its function is as follows. Catalyzes the removal of terminal sialic acid residues from viral and cellular glycoconjugates. Cleaves off the terminal sialic acids on the glycosylated HA during virus budding to facilitate virus release. Additionally helps virus spread through the circulation by further removing sialic acids from the cell surface. These cleavages prevent self-aggregation and ensure the efficient spread of the progeny virus from cell to cell. Otherwise, infection would be limited to one round of replication. Described as a receptor-destroying enzyme because it cleaves a terminal sialic acid from the cellular receptors. May facilitate viral invasion of the upper airways by cleaving the sialic acid moieties on the mucin of the airway epithelial cells. Likely to plays a role in the budding process through its association with lipid rafts during intracellular transport. May additionally display a raft-association independent effect on budding. Plays a role in the determination of host range restriction on replication and virulence. Sialidase activity in late endosome/lysosome traffic seems to enhance virus replication. The polypeptide is Neuraminidase (Influenza A virus (strain A/Brazil/11/1978 H1N1)).